We begin with the raw amino-acid sequence, 353 residues long: Protein pelota homolog (353 aa).

Belongs to the eukaryotic release factor 1 family. Pelota subfamily. In terms of assembly, monomer. A divalent metal cation serves as cofactor.

The protein localises to the cytoplasm. In terms of biological role, may function in recognizing stalled ribosomes, interact with stem-loop structures in stalled mRNA molecules, and effect endonucleolytic cleavage of the mRNA. May play a role in the release non-functional ribosomes and degradation of damaged mRNAs. Has endoribonuclease activity. The protein is Protein pelota homolog of Methanobrevibacter smithii (strain ATCC 35061 / DSM 861 / OCM 144 / PS).